The following is a 393-amino-acid chain: S-adenosylmethionine synthase (393 aa).

An ATP-binding site is contributed by histidine 17. Residue aspartate 19 participates in Mg(2+) binding. K(+) is bound at residue glutamate 45. L-methionine-binding residues include glutamate 58 and glutamine 106. Residues glutamine 106–alanine 116 are flexible loop. ATP contacts are provided by residues aspartate 171–lysine 173, lysine 237–phenylalanine 238, aspartate 246, arginine 252–lysine 253, alanine 269, and lysine 273. Aspartate 246 is a binding site for L-methionine. L-methionine is bound at residue lysine 277.

Belongs to the AdoMet synthase family. Homotetramer; dimer of dimers. Requires Mg(2+) as cofactor. K(+) serves as cofactor.

Its subcellular location is the cytoplasm. The catalysed reaction is L-methionine + ATP + H2O = S-adenosyl-L-methionine + phosphate + diphosphate. Its pathway is amino-acid biosynthesis; S-adenosyl-L-methionine biosynthesis; S-adenosyl-L-methionine from L-methionine: step 1/1. Catalyzes the formation of S-adenosylmethionine (AdoMet) from methionine and ATP. The overall synthetic reaction is composed of two sequential steps, AdoMet formation and the subsequent tripolyphosphate hydrolysis which occurs prior to release of AdoMet from the enzyme. The sequence is that of S-adenosylmethionine synthase from Ruegeria sp. (strain TM1040) (Silicibacter sp.).